Consider the following 264-residue polypeptide: tRNA pseudouridine synthase A (264 aa).

Asp-51 functions as the Nucleophile in the catalytic mechanism. Tyr-109 contacts substrate.

The protein belongs to the tRNA pseudouridine synthase TruA family. Homodimer.

The catalysed reaction is uridine(38/39/40) in tRNA = pseudouridine(38/39/40) in tRNA. Functionally, formation of pseudouridine at positions 38, 39 and 40 in the anticodon stem and loop of transfer RNAs. The sequence is that of tRNA pseudouridine synthase A from Pseudoalteromonas translucida (strain TAC 125).